The sequence spans 92 residues: Small ribosomal subunit protein uS19 (92 aa).

This sequence belongs to the universal ribosomal protein uS19 family.

Its function is as follows. Protein S19 forms a complex with S13 that binds strongly to the 16S ribosomal RNA. The chain is Small ribosomal subunit protein uS19 from Rickettsia canadensis (strain McKiel).